A 350-amino-acid polypeptide reads, in one-letter code: GTPase Obg (350 aa).

The 158-residue stretch at 1-158 (MFIDSVKITL…RLVRLELKLI (158 aa)) folds into the Obg domain. Residues 159 to 339 (ADVGLVGFPN…LKFMLLEEIK (181 aa)) enclose the OBG-type G domain. Residues 165-172 (GFPNVGKS), 190-194 (FTTLT), 212-215 (DIPG), 280-283 (SKSD), and 320-322 (SSL) each bind GTP. Residues S172 and T192 each coordinate Mg(2+).

It belongs to the TRAFAC class OBG-HflX-like GTPase superfamily. OBG GTPase family. In terms of assembly, monomer. Mg(2+) serves as cofactor.

The protein localises to the cytoplasm. Functionally, an essential GTPase which binds GTP, GDP and possibly (p)ppGpp with moderate affinity, with high nucleotide exchange rates and a fairly low GTP hydrolysis rate. Plays a role in control of the cell cycle, stress response, ribosome biogenesis and in those bacteria that undergo differentiation, in morphogenesis control. The polypeptide is GTPase Obg (Campylobacter jejuni subsp. jejuni serotype O:2 (strain ATCC 700819 / NCTC 11168)).